A 602-amino-acid polypeptide reads, in one-letter code: Elongation factor 4 (602 aa).

Positions 7–188 constitute a tr-type G domain; it reads ENIRNFSIIA…SIIRLVPPPK (182 aa). Residues 19–24 and 135–138 contribute to the GTP site; these read DHGKST and NKID.

This sequence belongs to the TRAFAC class translation factor GTPase superfamily. Classic translation factor GTPase family. LepA subfamily.

The protein localises to the cell inner membrane. The enzyme catalyses GTP + H2O = GDP + phosphate + H(+). Its function is as follows. Required for accurate and efficient protein synthesis under certain stress conditions. May act as a fidelity factor of the translation reaction, by catalyzing a one-codon backward translocation of tRNAs on improperly translocated ribosomes. Back-translocation proceeds from a post-translocation (POST) complex to a pre-translocation (PRE) complex, thus giving elongation factor G a second chance to translocate the tRNAs correctly. Binds to ribosomes in a GTP-dependent manner. The chain is Elongation factor 4 from Chlamydia muridarum (strain MoPn / Nigg).